The sequence spans 798 residues: Penicillin-binding protein 1A (798 aa).

Residues 1–9 (MIKKIVTTC) lie on the Cytoplasmic side of the membrane. Residues 10 to 30 (FGLVLGLCVFGVGLVAIAILV) traverse the membrane as a helical; Signal-anchor for type II membrane protein segment. Residues 31–798 (TYPKLPSLDS…SKQPQLDSLF (768 aa)) are Periplasmic-facing. The tract at residues 50–218 (LTIYSADGEV…SAYNPIVNPE (169 aa)) is transglycosylase. The active-site Proton donor; for transglycosylase activity is E88. Residues 414–700 (VVVQEPLLQA…GTIAVPVWVD (287 aa)) form a transpeptidase region. The active-site Acyl-ester intermediate; for transpeptidase activity is the S461. Positions 751–798 (SRRIREDKEAGAEDVERGAADEVRQEVQETPVLPSNTGSKQPQLDSLF) are disordered. Residues 753-777 (RIREDKEAGAEDVERGAADEVRQEV) show a composition bias toward basic and acidic residues. A compositionally biased stretch (polar residues) spans 783–798 (LPSNTGSKQPQLDSLF).

The protein in the N-terminal section; belongs to the glycosyltransferase 51 family. This sequence in the C-terminal section; belongs to the transpeptidase family.

The protein localises to the cell inner membrane. It carries out the reaction [GlcNAc-(1-&gt;4)-Mur2Ac(oyl-L-Ala-gamma-D-Glu-L-Lys-D-Ala-D-Ala)](n)-di-trans,octa-cis-undecaprenyl diphosphate + beta-D-GlcNAc-(1-&gt;4)-Mur2Ac(oyl-L-Ala-gamma-D-Glu-L-Lys-D-Ala-D-Ala)-di-trans,octa-cis-undecaprenyl diphosphate = [GlcNAc-(1-&gt;4)-Mur2Ac(oyl-L-Ala-gamma-D-Glu-L-Lys-D-Ala-D-Ala)](n+1)-di-trans,octa-cis-undecaprenyl diphosphate + di-trans,octa-cis-undecaprenyl diphosphate + H(+). The enzyme catalyses Preferential cleavage: (Ac)2-L-Lys-D-Ala-|-D-Ala. Also transpeptidation of peptidyl-alanyl moieties that are N-acyl substituents of D-alanine.. It participates in cell wall biogenesis; peptidoglycan biosynthesis. Its function is as follows. Cell wall formation. Synthesis of cross-linked peptidoglycan from the lipid intermediates. The enzyme has a penicillin-insensitive transglycosylase N-terminal domain (formation of linear glycan strands) and a penicillin-sensitive transpeptidase C-terminal domain (cross-linking of the peptide subunits). The protein is Penicillin-binding protein 1A (mrcA) of Neisseria cinerea.